The following is a 70-amino-acid chain: Cold shock-like protein CspH (70 aa).

Positions 7–67 (GIVKTFDRKS…GLRGPTAANV (61 aa)) constitute a CSD domain.

Its subcellular location is the cytoplasm. This is Cold shock-like protein CspH (cspH) from Escherichia coli O6:H1 (strain CFT073 / ATCC 700928 / UPEC).